Reading from the N-terminus, the 60-residue chain is DNA-binding protein 7c (60 aa).

A disordered region spans residues 37–60; that stretch reads DNGKTGRGAVSEKDAPKELLEKLK. The span at 46–60 shows a compositional bias: basic and acidic residues; the sequence is VSEKDAPKELLEKLK.

This sequence belongs to the 7 kDa DNA-binding/endoribonuclease P2 family. Monomer.

It localises to the cytoplasm. Can constrain negative DNA supercoils. May be involved in maintaining the integrity of the genome at high temperature. This chain is DNA-binding protein 7c, found in Acidianus hospitalis (strain W1).